A 136-amino-acid polypeptide reads, in one-letter code: Ribonuclease P protein component (136 aa).

The segment at 39-59 (LPDVSSSKPARDTGAEQTSAP) is disordered.

This sequence belongs to the RnpA family. In terms of assembly, consists of a catalytic RNA component (M1 or rnpB) and a protein subunit.

It carries out the reaction Endonucleolytic cleavage of RNA, removing 5'-extranucleotides from tRNA precursor.. RNaseP catalyzes the removal of the 5'-leader sequence from pre-tRNA to produce the mature 5'-terminus. It can also cleave other RNA substrates such as 4.5S RNA. The protein component plays an auxiliary but essential role in vivo by binding to the 5'-leader sequence and broadening the substrate specificity of the ribozyme. In Salinispora tropica (strain ATCC BAA-916 / DSM 44818 / JCM 13857 / NBRC 105044 / CNB-440), this protein is Ribonuclease P protein component.